Here is a 230-residue protein sequence, read N- to C-terminus: UPF0758 protein plu4865 (230 aa).

The MPN domain maps to 108–230 (IMSSPSVTQE…CVSFAERGWI (123 aa)). Zn(2+) is bound by residues histidine 179, histidine 181, and aspartate 192. Positions 179 to 192 (HNHPSGHAEPSLAD) match the JAMM motif motif.

Belongs to the UPF0758 family. YicR subfamily.

This chain is UPF0758 protein plu4865, found in Photorhabdus laumondii subsp. laumondii (strain DSM 15139 / CIP 105565 / TT01) (Photorhabdus luminescens subsp. laumondii).